The following is a 446-amino-acid chain: tRNA modification GTPase MnmE (446 aa).

Residues Arg21, Glu77, and Lys116 each contribute to the (6S)-5-formyl-5,6,7,8-tetrahydrofolate site. A TrmE-type G domain is found at 212 to 370 (GFRIALIGAP…LRAALASHVA (159 aa)). Asn222 provides a ligand contact to K(+). Residues 222 to 227 (NAGKST), 241 to 247 (TDVAGTT), and 266 to 269 (DTAG) each bind GTP. Ser226 contacts Mg(2+). K(+) is bound by residues Thr241, Val243, and Thr246. Thr247 serves as a coordination point for Mg(2+). Lys446 provides a ligand contact to (6S)-5-formyl-5,6,7,8-tetrahydrofolate.

The protein belongs to the TRAFAC class TrmE-Era-EngA-EngB-Septin-like GTPase superfamily. TrmE GTPase family. In terms of assembly, homodimer. Heterotetramer of two MnmE and two MnmG subunits. K(+) serves as cofactor.

Its subcellular location is the cytoplasm. Its function is as follows. Exhibits a very high intrinsic GTPase hydrolysis rate. Involved in the addition of a carboxymethylaminomethyl (cmnm) group at the wobble position (U34) of certain tRNAs, forming tRNA-cmnm(5)s(2)U34. The chain is tRNA modification GTPase MnmE from Caulobacter vibrioides (strain ATCC 19089 / CIP 103742 / CB 15) (Caulobacter crescentus).